The chain runs to 316 residues: Protoheme IX farnesyltransferase (316 aa).

9 consecutive transmembrane segments (helical) span residues 32–52, 53–73, 93–113, 116–136, 152–172, 180–200, 221–241, 252–271, and 289–309; these read VMSL…GHIH, PVLG…SGAL, IPAG…LSGF, VILG…TIFF, NIVI…ACVT, TVLF…LALF, VTKH…ILPS, LVAA…VWRM, and IFYL…SIFV.

This sequence belongs to the UbiA prenyltransferase family. Protoheme IX farnesyltransferase subfamily.

It localises to the cell inner membrane. It catalyses the reaction heme b + (2E,6E)-farnesyl diphosphate + H2O = Fe(II)-heme o + diphosphate. It functions in the pathway porphyrin-containing compound metabolism; heme O biosynthesis; heme O from protoheme: step 1/1. In terms of biological role, converts heme B (protoheme IX) to heme O by substitution of the vinyl group on carbon 2 of heme B porphyrin ring with a hydroxyethyl farnesyl side group. This Rhizobium leguminosarum bv. trifolii (strain WSM2304) protein is Protoheme IX farnesyltransferase.